We begin with the raw amino-acid sequence, 493 residues long: Ubiquitin carboxyl-terminal hydrolase 14 (493 aa).

The 77-residue stretch at 4-80 folds into the Ubiquitin-like domain; the sequence is YSVTVKWGKE…MMGSADALPE (77 aa). Position 52 is a phosphothreonine (Thr-52). The USP domain maps to 105 to 482; it reads CGLTNLGNTC…IAYVLLYGPR (378 aa). Cys-114 (nucleophile) is an active-site residue. 5 positions are modified to phosphoserine: Ser-143, Ser-148, Ser-236, Ser-301, and Ser-431. The Proton acceptor role is filled by His-434. Position 448 is an N6-acetyllysine (Lys-448).

This sequence belongs to the peptidase C19 family. USP14/UBP6 subfamily. Homodimer (Potential). Associates with the 26S proteasome. Interacts with FANCC, CXCR4 and ERN1. Interacts with TRIM14; this interaction recruits USP14 to cleave ubiquitin chains of CGAS.

It is found in the cytoplasm. Its subcellular location is the cell membrane. The enzyme catalyses Thiol-dependent hydrolysis of ester, thioester, amide, peptide and isopeptide bonds formed by the C-terminal Gly of ubiquitin (a 76-residue protein attached to proteins as an intracellular targeting signal).. Functionally, proteasome-associated deubiquitinase which releases ubiquitin from the proteasome targeted ubiquitinated proteins. Ensures the regeneration of ubiquitin at the proteasome. Is a reversibly associated subunit of the proteasome and a large fraction of proteasome-free protein exists within the cell. Required for the degradation of the chemokine receptor CXCR4 which is critical for CXCL12-induced cell chemotaxis. Also serves as a physiological inhibitor of endoplasmic reticulum-associated degradation (ERAD) under the non-stressed condition by inhibiting the degradation of unfolded endoplasmic reticulum proteins via interaction with ERN1. Indispensable for synaptic development and function at neuromuscular junctions (NMJs). Plays a role in the innate immune defense against viruses by stabilizing the viral DNA sensor CGAS and thus inhibiting its autophagic degradation. The protein is Ubiquitin carboxyl-terminal hydrolase 14 (USP14) of Oryctolagus cuniculus (Rabbit).